The following is a 901-amino-acid chain: Protein translocase subunit SecA (901 aa).

Residues glutamine 87, 105–109 (GEGKT), and aspartate 512 contribute to the ATP site. The tract at residues 859 to 901 (HQDDDSAAAAALAAQTGERKVGRNDPCPCGSGKKYKQCHGRLQ) is disordered. Zn(2+) contacts are provided by cysteine 885, cysteine 887, cysteine 896, and histidine 897. A compositionally biased stretch (basic residues) spans 891 to 901 (KKYKQCHGRLQ).

This sequence belongs to the SecA family. In terms of assembly, monomer and homodimer. Part of the essential Sec protein translocation apparatus which comprises SecA, SecYEG and auxiliary proteins SecDF-YajC and YidC. The cofactor is Zn(2+).

Its subcellular location is the cell inner membrane. It is found in the cytoplasm. The enzyme catalyses ATP + H2O + cellular proteinSide 1 = ADP + phosphate + cellular proteinSide 2.. Its function is as follows. Part of the Sec protein translocase complex. Interacts with the SecYEG preprotein conducting channel. Has a central role in coupling the hydrolysis of ATP to the transfer of proteins into and across the cell membrane, serving both as a receptor for the preprotein-SecB complex and as an ATP-driven molecular motor driving the stepwise translocation of polypeptide chains across the membrane. This is Protein translocase subunit SecA from Shigella dysenteriae serotype 1 (strain Sd197).